A 266-amino-acid chain; its full sequence is 3-methyl-2-oxobutanoate hydroxymethyltransferase (266 aa).

Mg(2+) is bound by residues Asp-45 and Asp-84. 3-methyl-2-oxobutanoate-binding positions include 45-46 (DS), Asp-84, and Lys-112. Glu-114 serves as a coordination point for Mg(2+). Glu-181 serves as the catalytic Proton acceptor.

It belongs to the PanB family. Homodecamer; pentamer of dimers. Mg(2+) is required as a cofactor.

It localises to the cytoplasm. It carries out the reaction 3-methyl-2-oxobutanoate + (6R)-5,10-methylene-5,6,7,8-tetrahydrofolate + H2O = 2-dehydropantoate + (6S)-5,6,7,8-tetrahydrofolate. Its pathway is cofactor biosynthesis; (R)-pantothenate biosynthesis; (R)-pantoate from 3-methyl-2-oxobutanoate: step 1/2. Its function is as follows. Catalyzes the reversible reaction in which hydroxymethyl group from 5,10-methylenetetrahydrofolate is transferred onto alpha-ketoisovalerate to form ketopantoate. In Stutzerimonas stutzeri (strain A1501) (Pseudomonas stutzeri), this protein is 3-methyl-2-oxobutanoate hydroxymethyltransferase.